A 277-amino-acid chain; its full sequence is Pantothenate synthetase (277 aa).

26–33 (MGNLHEGH) is an ATP binding site. Catalysis depends on His-33, which acts as the Proton donor. Gln-57 is a (R)-pantoate binding site. Gln-57 is a binding site for beta-alanine. An ATP-binding site is contributed by 144–147 (GKKD). Gln-150 lines the (R)-pantoate pocket. ATP-binding positions include Gly-173 and 181-184 (LSSR).

Belongs to the pantothenate synthetase family. In terms of assembly, homodimer.

The protein resides in the cytoplasm. It catalyses the reaction (R)-pantoate + beta-alanine + ATP = (R)-pantothenate + AMP + diphosphate + H(+). Its pathway is cofactor biosynthesis; (R)-pantothenate biosynthesis; (R)-pantothenate from (R)-pantoate and beta-alanine: step 1/1. Catalyzes the condensation of pantoate with beta-alanine in an ATP-dependent reaction via a pantoyl-adenylate intermediate. This Laribacter hongkongensis (strain HLHK9) protein is Pantothenate synthetase.